The sequence spans 172 residues: MLDAFSKVVAQADARGEFLSNTQLDALSKMVADGNKRLDATAAISANAATIVTNAARSLFSEQPQLIQPGGNAYTNRRMAACLRDMEIILRYVSYATIAGDSSVLDDRCLNGLRETYQALGVPGASVALAVEKMKEAAIAFANDSSNVTIGDCSALISEIATYFDRAAKAVV.

(2R,3E)-phycocyanobilin contacts are provided by residues N35, D39, N72, R77, C82, C82–I88, T149–G151, and C153. Position 72 is an N4-methylasparagine (N72).

The protein belongs to the phycobiliprotein family. In terms of assembly, heterodimer of an alpha and a beta subunit, which further assembles into trimers and the trimers into hexamers. The basic functional unit of phycobiliproteins is a ring-shaped hexamer formed from two back-to-back trimers contacting via the alpha chain subunits. The trimers are composed of alpha/beta subunit heterodimers arranged around a three-fold axis of symmetry. The phycoerythrins also contain a gamma subunit which is located in the center of the hexamer. Post-translationally, contains two covalently linked phycocyanobilin chromophores.

It localises to the plastid. It is found in the chloroplast thylakoid membrane. Light-harvesting photosynthetic tetrapyrrole chromophore-protein from the phycobiliprotein complex (phycobilisome, PBS). Phycocyanin is the major phycobiliprotein in the PBS rod. The sequence is that of C-phycocyanin beta chain (cpcB) from Cyanidium caldarium (Red alga).